An 868-amino-acid chain; its full sequence is Alanine--tRNA ligase (868 aa).

Zn(2+) contacts are provided by H553, H557, C657, and H661. Positions 831–851 (GGKGGGRADMAQAGGSRPQAL) are disordered.

The protein belongs to the class-II aminoacyl-tRNA synthetase family. Zn(2+) serves as cofactor.

It is found in the cytoplasm. It carries out the reaction tRNA(Ala) + L-alanine + ATP = L-alanyl-tRNA(Ala) + AMP + diphosphate. Catalyzes the attachment of alanine to tRNA(Ala) in a two-step reaction: alanine is first activated by ATP to form Ala-AMP and then transferred to the acceptor end of tRNA(Ala). Also edits incorrectly charged Ser-tRNA(Ala) and Gly-tRNA(Ala) via its editing domain. This Chromohalobacter salexigens (strain ATCC BAA-138 / DSM 3043 / CIP 106854 / NCIMB 13768 / 1H11) protein is Alanine--tRNA ligase.